Reading from the N-terminus, the 345-residue chain is UPF0324 membrane protein CTC_01844 (345 aa).

10 helical membrane-spanning segments follow: residues Y7 to I24, I28 to V50, L70 to V87, S91 to F113, S120 to I142, A152 to F174, Y181 to S203, F209 to I231, I261 to N283, and S316 to V338.

Belongs to the UPF0324 family.

The protein resides in the cell membrane. The protein is UPF0324 membrane protein CTC_01844 of Clostridium tetani (strain Massachusetts / E88).